We begin with the raw amino-acid sequence, 136 residues long: Cytochrome b5 (136 aa).

The Cytochrome b5 heme-binding domain occupies 5-81 (TKVFTLAEVS…LDEYYVGDID (77 aa)). Residues His-40 and His-64 each coordinate heme. A helical membrane pass occupies residues 107–127 (FVVKLLQFLVPLIILGVAFGI).

The protein belongs to the cytochrome b5 family. In terms of tissue distribution, is highly expressed in developing seeds, moderately expressed in flowers, and is expressed at low levels in the leaf.

Its subcellular location is the endoplasmic reticulum membrane. It localises to the microsome membrane. Functionally, cytochrome b5 is a membrane bound hemoprotein which function as an electron carrier for several membrane bound oxygenases. May play a key role in the modification by desaturation of fatty acids in the endoplasmic reticulum, which in the developing seed is utilized for membrane synthesis and in the developmentally regulated production of large amounts of storage lipids. Is involved in the reduction of cytochrome P-450 and may therefore be involved in flavonoid biosynthesis in the petals. The chain is Cytochrome b5 from Nicotiana tabacum (Common tobacco).